We begin with the raw amino-acid sequence, 122 residues long: Large ribosomal subunit protein uL14c (122 aa).

Belongs to the universal ribosomal protein uL14 family. Part of the 50S ribosomal subunit.

The protein localises to the plastid. It localises to the chloroplast. Functionally, binds to 23S rRNA. The chain is Large ribosomal subunit protein uL14c from Anthoceros angustus (Hornwort).